Consider the following 263-residue polypeptide: Hydroxyacylglutathione hydrolase (263 aa).

7 residues coordinate Zn(2+): His55, His57, Asp59, His60, His117, Asp134, and His172.

Belongs to the metallo-beta-lactamase superfamily. Glyoxalase II family. Monomer. Requires Zn(2+) as cofactor.

It catalyses the reaction an S-(2-hydroxyacyl)glutathione + H2O = a 2-hydroxy carboxylate + glutathione + H(+). Its pathway is secondary metabolite metabolism; methylglyoxal degradation; (R)-lactate from methylglyoxal: step 2/2. Thiolesterase that catalyzes the hydrolysis of S-D-lactoyl-glutathione to form glutathione and D-lactic acid. In Shewanella baltica (strain OS195), this protein is Hydroxyacylglutathione hydrolase.